The chain runs to 296 residues: Stanniocalcin-2 (296 aa).

The first 24 residues, 1–24 (MCAERLGQFVTLALVFATLDPARG), serve as a signal peptide directing secretion. The disordered stretch occupies residues 22–44 (ARGTDSTNPPEGPQDRGSQQKGR). Residue Asn-73 is glycosylated (N-linked (GlcNAc...) asparagine). Positions 236–296 (RPYHRDTDHH…EQSEYSDIRR (61 aa)) are disordered. Residues 238–258 (YHRDTDHHLTANRGAKGERGS) are compositionally biased toward basic and acidic residues.

This sequence belongs to the stanniocalcin family. Homodimer; disulfide-linked. As to expression, expressed in a variety of tissues. Strongly expressed in ovary and to a lesser extent in kidney.

The protein resides in the secreted. In terms of biological role, has an anti-hypocalcemic action on calcium and phosphate homeostasis. This chain is Stanniocalcin-2 (Stc2), found in Rattus norvegicus (Rat).